The primary structure comprises 393 residues: Cytochrome b (393 aa).

Topologically, residues 1 to 33 (MTIRNQRFSLLKQPISSTLNQHLVDYPTPSNLS) are mitochondrial matrix. The helical transmembrane segment at 34–57 (YWWGFGSLAGICLVIQIVTGVFLA) threads the bilayer. Residues 58–80 (MHYTPHVDLAFNSVEHIMRDVEG) are Mitochondrial intermembrane-facing. A helical membrane pass occupies residues 81-108 (GWLLRYMHANGASMFFIVVYLHIFRGLY). Histidine 88 and histidine 102 together coordinate heme b. The Mitochondrial matrix segment spans residues 109–116 (YASYSSPR). Residues 117 to 141 (EFVWCLGVVIFLLMIVTAFIGYVLP) traverse the membrane as a helical segment. The Mitochondrial intermembrane segment spans residues 142–178 (WGQMSFWGATVITSLASAIPVVGDTIVTWLWGGFSVD). The chain crosses the membrane as a helical span at residues 179 to 210 (NATLNRFFSLHYLLPFILVGASLLHLAALHQY). Heme b contacts are provided by histidine 189 and histidine 203. Histidine 208 lines the a ubiquinone pocket. Topologically, residues 211–229 (GSNNPLGVHSEMDKIAFYP) are mitochondrial matrix. The chain crosses the membrane as a helical span at residues 230–252 (YFYVKDLVGWVAFAIFFSIWIFY). At 253–293 (APNVLGHPDNYIPANPMSTPPHIVPEWYFLPIYAILRSIPD) the chain is on the mitochondrial intermembrane side. Residues 294-314 (KAGGVAAIALVFICLLALPFF) form a helical membrane-spanning segment. The Mitochondrial matrix portion of the chain corresponds to 315–325 (KSMYVRSSSFR). Residues 326 to 346 (PIYQGMFWLLLADCLLLGWIG) form a helical membrane-spanning segment. The Mitochondrial intermembrane segment spans residues 347-353 (CQPVEAP). The helical transmembrane segment at 354–370 (FVTIGQISSLVFFLFFA) threads the bilayer. At 371-393 (ITPILGRVGRGIPNSYTDETDHT) the chain is on the mitochondrial matrix side.

It belongs to the cytochrome b family. As to quaternary structure, component of the ubiquinol-cytochrome c oxidoreductase (cytochrome b-c1 complex, complex III, CIII), a multisubunit enzyme composed of 10 subunits. The complex is composed of 3 respiratory subunits cytochrome b (MT-CYB), cytochrome c1 (CYC1-1 or CYC1-2) and Rieske protein (UCR1-1 or UCR1-2), 2 core protein subunits MPPalpha1 (or MPPalpha2) and MPPB, and 5 low-molecular weight protein subunits QCR7-1 (or QCR7-2), UCRQ-1 (or UCRQ-2), QCR9, UCRY and probably QCR6-1 (or QCR6-2). The complex exists as an obligatory dimer and forms supercomplexes (SCs) in the inner mitochondrial membrane with NADH-ubiquinone oxidoreductase (complex I, CI), resulting in different assemblies (supercomplexes SCI(1)III(2) and SCI(2)III(4)). The cofactor is heme b.

It is found in the mitochondrion inner membrane. In terms of biological role, component of the ubiquinol-cytochrome c oxidoreductase, a multisubunit transmembrane complex that is part of the mitochondrial electron transport chain which drives oxidative phosphorylation. The respiratory chain contains 3 multisubunit complexes succinate dehydrogenase (complex II, CII), ubiquinol-cytochrome c oxidoreductase (cytochrome b-c1 complex, complex III, CIII) and cytochrome c oxidase (complex IV, CIV), that cooperate to transfer electrons derived from NADH and succinate to molecular oxygen, creating an electrochemical gradient over the inner membrane that drives transmembrane transport and the ATP synthase. The cytochrome b-c1 complex catalyzes electron transfer from ubiquinol to cytochrome c, linking this redox reaction to translocation of protons across the mitochondrial inner membrane, with protons being carried across the membrane as hydrogens on the quinol. In the process called Q cycle, 2 protons are consumed from the matrix, 4 protons are released into the intermembrane space and 2 electrons are passed to cytochrome c. Cytochrome b is a catalytic core subunit containing 2 b-type hemes BL and BH topographically segregated in the quinone reduction (Qi) and quinol oxidation (Q0) sites on opposite sides of the membrane. In Arabidopsis thaliana (Mouse-ear cress), this protein is Cytochrome b (MT-CYB).